The sequence spans 511 residues: MKKLKINYLLIGIVTLLLAAALWPSIPWSGKPENRVAGIIARGELRISTINSPMTFATMNNKAFGLDYELAKQFADYLGVTLKITVRQNISQLFDDLDDGQADMLAAGLVYNQERVKNYQAGPTYYSVSQQLVYRVGNTRPRTLAALTAEQLTIAPGHVAINDLQTLKAEKYPDLAWRVDEKRGTTALMQAVIDGKLDYTIADSVAVSLFQRVHPELAVALDITDEQPVTWFSARDDDNSLSAAMLDFFNNINEDGTLARLEEKYLGHGNDFDYVDTRTFLRAVENILPEVQPLFEKYAREIDWRLLAAIAWQESHWDPQATSPTGVRGMMMLTRNTAQSLGLTDRTDAAQSIDGGMRYLQDMMDKVPDSIPKDERIWFALAAYNMGYAHMLDAMALTRKQKGNPNSWADVKLRLPLLSQKPYYSKLKYGYARGHEAYAYVENIRKYQISLVGYLSEKERQQQQTLALAEDYPAVLPNELEQPQETTLPFFKFRADKQMDNARMKLPGHLY.

An N-terminal signal peptide occupies residues 1–19; it reads MKKLKINYLLIGIVTLLLA. The segment at 20–269 is non-LT domain; sequence AALWPSIPWS…RLEEKYLGHG (250 aa). Residues 270–511 are LT domain; sequence NDFDYVDTRT…ARMKLPGHLY (242 aa). The active site involves glutamate 314.

This sequence in the N-terminal section; belongs to the bacterial solute-binding protein 3 family. The protein in the C-terminal section; belongs to the transglycosylase Slt family.

It localises to the cell outer membrane. The catalysed reaction is Exolytic cleavage of the (1-&gt;4)-beta-glycosidic linkage between N-acetylmuramic acid (MurNAc) and N-acetylglucosamine (GlcNAc) residues in peptidoglycan, from either the reducing or the non-reducing ends of the peptidoglycan chains, with concomitant formation of a 1,6-anhydrobond in the MurNAc residue.. In terms of biological role, murein-degrading enzyme that degrades murein glycan strands and insoluble, high-molecular weight murein sacculi, with the concomitant formation of a 1,6-anhydromuramoyl product. Lytic transglycosylases (LTs) play an integral role in the metabolism of the peptidoglycan (PG) sacculus. Their lytic action creates space within the PG sacculus to allow for its expansion as well as for the insertion of various structures such as secretion systems and flagella. The chain is Membrane-bound lytic murein transglycosylase F from Klebsiella pneumoniae subsp. pneumoniae (strain ATCC 700721 / MGH 78578).